The chain runs to 245 residues: Probable metal transport system ATP-binding protein CPn_0542/CP_0210/CPj0542/CpB0563 (245 aa).

One can recognise an ABC transporter domain in the interval 5–240 (ILAEGLAFRY…CCHPYKNQEF (236 aa)). An ATP-binding site is contributed by 39-46 (GPNGGGKS).

Belongs to the ABC transporter superfamily.

It is found in the cell inner membrane. Functionally, part of an ATP-driven transport system CPn0541/CPn0542/CPn0543 for a metal. Probably responsible for energy coupling to the transport system. In Chlamydia pneumoniae (Chlamydophila pneumoniae), this protein is Probable metal transport system ATP-binding protein CPn_0542/CP_0210/CPj0542/CpB0563.